The following is a 479-amino-acid chain: Beta-monoglucosyldiacylglycerol synthase (479 aa).

A run of 4 helical transmembrane segments spans residues 48–68, 363–383, 389–409, and 428–448; these read AAVM…WVWG, FLLM…MALW, LLTP…YYGL, and LART…MPAV.

The protein belongs to the glycosyltransferase 2 family. It depends on Mg(2+) as a cofactor.

It is found in the membrane. The enzyme catalyses a 1,2-diacyl-sn-glycerol + UDP-alpha-D-glucose = a 1,2-diacyl-3-O-(beta-D-glucopyranosyl)-sn-glycerol + UDP + H(+). In terms of biological role, glucosyltransferase involved in the biosynthesis of the non-bilayer-forming membrane lipid beta-monoglucosyldiacylglycerol which contributes to regulate the properties and stability of the membrane. Catalyzes the transfer of a glucosyl residue from UDP-Glc to diacylglycerol (DAG) acceptor to form the corresponding beta-glucosyl-DAG (1,2-diacyl-3-O-(beta-D-glucopyranosyl)-sn-glycerol). It can only use UDP-Glc as sugar donor. Two types of DAG (dipalmitoyl-DAG (DPDAG) and 1-oleoyl-2-palmitoyl-DAG (OPDAG)) can be used as sugar acceptors, but OPDAG is preferred. The polypeptide is Beta-monoglucosyldiacylglycerol synthase (Synechocystis sp. (strain ATCC 27184 / PCC 6803 / Kazusa)).